We begin with the raw amino-acid sequence, 427 residues long: Delta(14)-sterol reductase (427 aa).

Residues 1 to 25 are Cytoplasmic-facing; the sequence is MSEQESRDNAAVDAVRQKYGFGFSW. The helical transmembrane segment at 26–46 threads the bilayer; that stretch reads LVLMIALPPLVYYLWICVTYY. Over 47-70 the chain is Periplasmic; it reads QGELVFTSDAAAWRRFWSHVAPPT. Residues 71–91 traverse the membrane as a helical segment; it reads WHAAGLYAAWFLGQAALQVWA. The Cytoplasmic segment spans residues 92-110; that stretch reads PGPTVQGMKLPDGSRLDYR. Residues 111–131 traverse the membrane as a helical segment; sequence MNGIFSFLFTLAVVFGLVTMG. Residues 132–141 lie on the Periplasmic side of the membrane; that stretch reads WLDATVLYDQ. The chain crosses the membrane as a helical span at residues 142 to 162; the sequence is LGPLLTVVNIFTFVFAGFLYF. At 163 to 197 the chain is on the cytoplasmic side; that stretch reads WGLNGKQWERPTGRPFYDYFMGTALNPRIGSLDLK. Residues 198 to 218 form a helical membrane-spanning segment; the sequence is LFCEARPGMIFWLLMNLSMAA. Residues 219–226 are Periplasmic-facing; sequence KQYELHGT. A helical transmembrane segment spans residues 227 to 247; that stretch reads VTVPMLLVVGFQSFYLIDYFI. Over 248–262 the chain is Cytoplasmic; it reads HEEAVLTTWDIKHEK. The helical transmembrane segment at 263-283 threads the bilayer; sequence FGWMLCWGDLVWLPFTYTLQA. The Periplasmic portion of the chain corresponds to 284–291; that stretch reads QYLVHHTH. A helical transmembrane segment spans residues 292–312; it reads DLPVWGIIAIVALNLAGYAIF. Topologically, residues 313 to 356 are cytoplasmic; the sequence is RGANIQKHHFRRDPNRIVWGKPAKYIKTKQGSLLLTSGWWGIAR. Residues Lys319, Arg323, Leu347, Trp352, and 359–360 contribute to the NADP(+) site; that span reads NY. A helical transmembrane segment spans residues 357–377; that stretch reads HMNYFGDLMIALSWCLPAAFG. Ser378 is a topological domain (periplasmic). The helical transmembrane segment at 379–399 threads the bilayer; the sequence is PIPYFHIVYFTILLLHREKRD. Residues Asp399, 403-407, and Tyr414 each bind NADP(+); that span reads CLAKY. At 400-427 the chain is on the cytoplasmic side; sequence DAMCLAKYGEDWLQYRKKVPWRIVPKIY.

This sequence belongs to the ERG4/ERG24 family.

The protein resides in the cell inner membrane. The catalysed reaction is 4,4-dimethyl-5alpha-cholesta-8,24-dien-3beta-ol + NADP(+) = 4,4-dimethyl-5alpha-cholesta-8,14,24-trien-3beta-ol + NADPH + H(+). It participates in steroid biosynthesis; zymosterol biosynthesis; zymosterol from lanosterol. Its function is as follows. Reduces the C14=C15 double bond of 4,4-dimethyl-cholesta-8,14,24-trienol to produce 4,4-dimethyl-cholesta-8,24-dienol. Complements the deletion of the Delta(14)-sterol reductase gene ERG24 in yeast. In Methylotuvimicrobium alcaliphilum (strain DSM 19304 / NCIMB 14124 / VKM B-2133 / 20Z) (Methylomicrobium alcaliphilum), this protein is Delta(14)-sterol reductase.